Here is a 593-residue protein sequence, read N- to C-terminus: Aspartate--tRNA(Asp/Asn) ligase (593 aa).

Residue glutamate 172 coordinates L-aspartate. Residues 196 to 199 (QLFK) form an aspartate region. L-aspartate is bound at residue arginine 218. ATP is bound by residues 218 to 220 (RDE) and glutamine 227. Residue histidine 450 participates in L-aspartate binding. Glutamate 484 lines the ATP pocket. Arginine 491 contributes to the L-aspartate binding site. 536 to 539 (GLDR) lines the ATP pocket.

It belongs to the class-II aminoacyl-tRNA synthetase family. Type 1 subfamily. In terms of assembly, homodimer.

Its subcellular location is the cytoplasm. It carries out the reaction tRNA(Asx) + L-aspartate + ATP = L-aspartyl-tRNA(Asx) + AMP + diphosphate. Its function is as follows. Aspartyl-tRNA synthetase with relaxed tRNA specificity since it is able to aspartylate not only its cognate tRNA(Asp) but also tRNA(Asn). Reaction proceeds in two steps: L-aspartate is first activated by ATP to form Asp-AMP and then transferred to the acceptor end of tRNA(Asp/Asn). The protein is Aspartate--tRNA(Asp/Asn) ligase of Nitrosomonas eutropha (strain DSM 101675 / C91 / Nm57).